The primary structure comprises 391 residues: Cathepsin E (391 aa).

Positions 1–19 (MKTFLLLLLVLLELGQAPG) are cleaved as a signal peptide. Positions 20-53 (ALHRVPLSRRESLRKKLRAQGQLTELWKSQNLNM) are cleaved as a propeptide — activation peptide. One can recognise a Peptidase A1 domain in the interval 74-387 (YFGTISIGSP…DRGNNRVGLA (314 aa)). N-linked (GlcNAc...) asparagine glycosylation is present at N86. The active site involves D92. Intrachain disulfides connect C105–C110 and C267–C271. Residue D276 is part of the active site. A disulfide bridge connects residues C309 and C346.

It belongs to the peptidase A1 family. In terms of assembly, homodimer; disulfide-linked. Post-translationally, glycosylated. The nature of the carbohydrate chain varies between cell types. As to expression, expressed abundantly in the surface and foveolar epithelial cells of the fundic and pyloric stomach mucosa, and at very low levels in the spleen.

Its subcellular location is the endosome. The catalysed reaction is Similar to cathepsin D, but slightly broader specificity.. Functionally, may have a role in immune function. Probably involved in the processing of antigenic peptides during MHC class II-mediated antigen presentation. May play a role in activation-induced lymphocyte depletion in the thymus, and in neuronal degeneration and glial cell activation in the brain. This chain is Cathepsin E (CTSE), found in Cavia porcellus (Guinea pig).